The primary structure comprises 369 residues: Anhydro-N-acetylmuramic acid kinase (369 aa).

Residue 12–19 (GTSMDGVD) participates in ATP binding.

Belongs to the anhydro-N-acetylmuramic acid kinase family.

It carries out the reaction 1,6-anhydro-N-acetyl-beta-muramate + ATP + H2O = N-acetyl-D-muramate 6-phosphate + ADP + H(+). Its pathway is amino-sugar metabolism; 1,6-anhydro-N-acetylmuramate degradation. The protein operates within cell wall biogenesis; peptidoglycan recycling. In terms of biological role, catalyzes the specific phosphorylation of 1,6-anhydro-N-acetylmuramic acid (anhMurNAc) with the simultaneous cleavage of the 1,6-anhydro ring, generating MurNAc-6-P. Is required for the utilization of anhMurNAc either imported from the medium or derived from its own cell wall murein, and thus plays a role in cell wall recycling. The protein is Anhydro-N-acetylmuramic acid kinase of Shewanella loihica (strain ATCC BAA-1088 / PV-4).